We begin with the raw amino-acid sequence, 316 residues long: MSNREQSLATPYLQFNRSQWAALRDSVPLTLTEEEIVKLKGINEDLSLDEVAEIYLPLSRLLNFYISSNLRRQAVLEQFLGTDGQKIPYIIGIAGSVAVGKSTTARVLQALLSRWPEHRSVELITTDGFLHPNKVLKERDLMKKKGFPQSYDMHSLVKFVSDIKSGTHKVTAPTYSHLTYDIVPNNNKVLEQPDILILEGLNVLQSGMDYPHDPHRVFVSDFVDFSIYVDAPETLLQTWYINRFLKFRQGAFSNPNSYFHNYAKLTEEEAVGIASQLWKEINGLNLKENILPTRERASLIMTKSANHAVECVRLRK.

95-102 (GSVAVGKS) lines the ATP pocket.

The protein belongs to the prokaryotic pantothenate kinase family.

It is found in the cytoplasm. It carries out the reaction (R)-pantothenate + ATP = (R)-4'-phosphopantothenate + ADP + H(+). The protein operates within cofactor biosynthesis; coenzyme A biosynthesis; CoA from (R)-pantothenate: step 1/5. This is Pantothenate kinase from Pectobacterium carotovorum subsp. carotovorum (strain PC1).